The sequence spans 474 residues: Aspartyl/glutamyl-tRNA(Asn/Gln) amidotransferase subunit B (474 aa).

It belongs to the GatB/GatE family. GatB subfamily. Heterotrimer of A, B and C subunits.

The enzyme catalyses L-glutamyl-tRNA(Gln) + L-glutamine + ATP + H2O = L-glutaminyl-tRNA(Gln) + L-glutamate + ADP + phosphate + H(+). The catalysed reaction is L-aspartyl-tRNA(Asn) + L-glutamine + ATP + H2O = L-asparaginyl-tRNA(Asn) + L-glutamate + ADP + phosphate + 2 H(+). Functionally, allows the formation of correctly charged Asn-tRNA(Asn) or Gln-tRNA(Gln) through the transamidation of misacylated Asp-tRNA(Asn) or Glu-tRNA(Gln) in organisms which lack either or both of asparaginyl-tRNA or glutaminyl-tRNA synthetases. The reaction takes place in the presence of glutamine and ATP through an activated phospho-Asp-tRNA(Asn) or phospho-Glu-tRNA(Gln). The protein is Aspartyl/glutamyl-tRNA(Asn/Gln) amidotransferase subunit B of Wolbachia pipientis wMel.